Here is a 1149-residue protein sequence, read N- to C-terminus: Eukaryotic translation initiation factor 3 subunit A (1149 aa).

The PCI domain occupies 317-498 (IQRMTSHVLI…HSVHFGTDLS (182 aa)). 2 disordered regions span residues 496 to 515 (DLSE…QSMP) and 811 to 1149 (EEER…KHHR). Residues 811–885 (EEERRRIEEE…APRGEKEERG (75 aa)) show a composition bias toward basic and acidic residues. Gly residues predominate over residues 886–895 (GGGGGGGAWR). Over residues 908-924 (AKPESDWRNAREAREPA) the composition is skewed to basic and acidic residues. Over residues 925 to 937 (PESAGASSAAAPA) the composition is skewed to low complexity. Composition is skewed to basic and acidic residues over residues 961–970 (RPPRGDDREP), 1005–1095 (GPMR…DRRG), and 1113–1132 (EPAK…KEAR).

The protein belongs to the eIF-3 subunit A family. As to quaternary structure, component of the eukaryotic translation initiation factor 3 (eIF-3) complex.

It localises to the cytoplasm. In terms of biological role, RNA-binding component of the eukaryotic translation initiation factor 3 (eIF-3) complex, which is involved in protein synthesis of a specialized repertoire of mRNAs and, together with other initiation factors, stimulates binding of mRNA and methionyl-tRNAi to the 40S ribosome. The eIF-3 complex specifically targets and initiates translation of a subset of mRNAs involved in cell proliferation. The sequence is that of Eukaryotic translation initiation factor 3 subunit A from Culex quinquefasciatus (Southern house mosquito).